The sequence spans 227 residues: Octanoyltransferase (227 aa).

Positions 47-223 constitute a BPL/LPL catalytic domain; it reads EDTADEIWLL…HLLRLLPPGV (177 aa). Substrate-binding positions include 87–94, 154–156, and 167–169; these read RGGQITYH, ALG, and GLA. Cys-185 serves as the catalytic Acyl-thioester intermediate.

The protein belongs to the LipB family.

The protein resides in the cytoplasm. The catalysed reaction is octanoyl-[ACP] + L-lysyl-[protein] = N(6)-octanoyl-L-lysyl-[protein] + holo-[ACP] + H(+). The protein operates within protein modification; protein lipoylation via endogenous pathway; protein N(6)-(lipoyl)lysine from octanoyl-[acyl-carrier-protein]: step 1/2. Catalyzes the transfer of endogenously produced octanoic acid from octanoyl-acyl-carrier-protein onto the lipoyl domains of lipoate-dependent enzymes. Lipoyl-ACP can also act as a substrate although octanoyl-ACP is likely to be the physiological substrate. This is Octanoyltransferase from Azoarcus sp. (strain BH72).